Reading from the N-terminus, the 200-residue chain is Small ribosomal subunit protein uS5 (200 aa).

Over residues 1–12 (MGRPRTSQTRGQ) the composition is skewed to polar residues. The tract at residues 1–49 (MGRPRTSQTRGQGPSGATGGNPRGGGSTTRERDARGARPGERDGGSEIQ) is disordered. Positions 13 to 27 (GPSGATGGNPRGGGS) are enriched in gly residues. The segment covering 29–49 (TRERDARGARPGERDGGSEIQ) has biased composition (basic and acidic residues). The S5 DRBM domain maps to 48 to 111 (IQDRVVQIRR…EKARHAMFDV (64 aa)).

It belongs to the universal ribosomal protein uS5 family. As to quaternary structure, part of the 30S ribosomal subunit. Contacts proteins S4 and S8.

In terms of biological role, with S4 and S12 plays an important role in translational accuracy. Located at the back of the 30S subunit body where it stabilizes the conformation of the head with respect to the body. The chain is Small ribosomal subunit protein uS5 from Rubrobacter xylanophilus (strain DSM 9941 / JCM 11954 / NBRC 16129 / PRD-1).